The sequence spans 386 residues: Homoserine O-succinyltransferase (386 aa).

In terms of domain architecture, AB hydrolase-1 spans 49-358; it reads NAILICHALS…DAEQGHDSFL (310 aa). The active-site Nucleophile is Ser156. Arg226 contributes to the substrate binding site. Active-site residues include Asp321 and His354. Position 355 (Asp355) interacts with substrate.

It belongs to the AB hydrolase superfamily. MetX family. Homodimer.

The protein resides in the cytoplasm. It catalyses the reaction L-homoserine + succinyl-CoA = O-succinyl-L-homoserine + CoA. The protein operates within amino-acid biosynthesis; L-methionine biosynthesis via de novo pathway; O-succinyl-L-homoserine from L-homoserine: step 1/1. In terms of biological role, transfers a succinyl group from succinyl-CoA to L-homoserine, forming succinyl-L-homoserine. The chain is Homoserine O-succinyltransferase from Acinetobacter baumannii (strain AB307-0294).